The following is a 149-amino-acid chain: Large ribosomal subunit protein uL15A (149 aa).

Residues 21-40 (RIGKHRKQRGGRGNAGGQHH) form a disordered region.

It belongs to the universal ribosomal protein uL15 family. As to quaternary structure, component of the large ribosomal subunit.

Its subcellular location is the cytoplasm. It is found in the cytosol. It localises to the endoplasmic reticulum. Component of the large ribosomal subunit. The ribosome is a large ribonucleoprotein complex responsible for the synthesis of proteins in the cell. In Entamoeba histolytica (strain ATCC 30459 / HM-1:IMSS / ABRM), this protein is Large ribosomal subunit protein uL15A (rpl27a-1).